The chain runs to 186 residues: Peptide deformylase 2 (186 aa).

Positions 104 and 146 each coordinate Fe cation. The active site involves E147. Position 150 (H150) interacts with Fe cation.

It belongs to the polypeptide deformylase family. Fe(2+) is required as a cofactor.

The enzyme catalyses N-terminal N-formyl-L-methionyl-[peptide] + H2O = N-terminal L-methionyl-[peptide] + formate. Its function is as follows. Removes the formyl group from the N-terminal Met of newly synthesized proteins. Requires at least a dipeptide for an efficient rate of reaction. N-terminal L-methionine is a prerequisite for activity but the enzyme has broad specificity at other positions. In Streptomyces avermitilis (strain ATCC 31267 / DSM 46492 / JCM 5070 / NBRC 14893 / NCIMB 12804 / NRRL 8165 / MA-4680), this protein is Peptide deformylase 2.